A 591-amino-acid polypeptide reads, in one-letter code: V-type ATP synthase alpha chain (591 aa).

232–239 contacts ATP; sequence GPFGAGKT.

The protein belongs to the ATPase alpha/beta chains family.

It catalyses the reaction ATP + H2O + 4 H(+)(in) = ADP + phosphate + 5 H(+)(out). In terms of biological role, produces ATP from ADP in the presence of a proton gradient across the membrane. The V-type alpha chain is a catalytic subunit. This chain is V-type ATP synthase alpha chain, found in Clostridium perfringens (strain SM101 / Type A).